A 248-amino-acid polypeptide reads, in one-letter code: ATP synthase subunit a, chloroplastic (248 aa).

The next 4 helical transmembrane spans lie at Leu-34–Leu-54, Val-95–Ile-115, Ile-134–Ser-154, and Val-203–Ala-223.

This sequence belongs to the ATPase A chain family. F-type ATPases have 2 components, CF(1) - the catalytic core - and CF(0) - the membrane proton channel. CF(1) has five subunits: alpha(3), beta(3), gamma(1), delta(1), epsilon(1). CF(0) has four main subunits: a, b, b' and c.

The protein localises to the plastid. It is found in the chloroplast thylakoid membrane. In terms of biological role, key component of the proton channel; it plays a direct role in the translocation of protons across the membrane. In Guillardia theta (Cryptophyte), this protein is ATP synthase subunit a, chloroplastic.